Here is a 1188-residue protein sequence, read N- to C-terminus: DNA-directed RNA polymerase subunit beta (1188 aa).

This sequence belongs to the RNA polymerase beta chain family. In terms of assembly, the RNAP catalytic core consists of 2 alpha, 1 beta, 1 beta' and 1 omega subunit. When a sigma factor is associated with the core the holoenzyme is formed, which can initiate transcription.

It catalyses the reaction RNA(n) + a ribonucleoside 5'-triphosphate = RNA(n+1) + diphosphate. Its function is as follows. DNA-dependent RNA polymerase catalyzes the transcription of DNA into RNA using the four ribonucleoside triphosphates as substrates. This Streptococcus pyogenes serotype M18 (strain MGAS8232) protein is DNA-directed RNA polymerase subunit beta.